The chain runs to 590 residues: Vesicular glutamate transporter 3 (590 aa).

Residues 1–76 are Cytoplasmic-facing; that stretch reads MPLGGFAGLK…CGCFGLPKRY (76 aa). Residues 77-97 form a helical membrane-spanning segment; sequence IIAMLSGLGFCISFGIRCNLG. The Vesicular portion of the chain corresponds to 98–130; the sequence is VAIVEMVNNNTVYINGTAVMQPAQFNWDPETVG. 2 N-linked (GlcNAc...) asparagine glycosylation sites follow: N106 and N112. The helical transmembrane segment at 131–151 threads the bilayer; that stretch reads LIHGSFFWGYIVTQIPGGFIS. Residues 152-153 are Cytoplasmic-facing; the sequence is NK. Residues 154–174 traverse the membrane as a helical segment; sequence LAANRVFGAAIFLTSVLNMFI. Over 175–182 the chain is Vesicular; that stretch reads PSAARVHY. A helical transmembrane segment spans residues 183-203; sequence GCVMFVRILQGLVEGVTYPAC. Topologically, residues 204–221 are cytoplasmic; it reads HGMWSKWAPPLERSRLAT. The chain crosses the membrane as a helical span at residues 222 to 242; sequence TSFCGSYAGAVIAMPLAGILV. The Vesicular segment spans residues 243 to 249; the sequence is QYVGWPS. A helical membrane pass occupies residues 250-270; it reads VFYIYGVFGIIWYIFWILLAY. Topologically, residues 271 to 315 are cytoplasmic; sequence NSPAVHPTISEEERNYIETSIGEGANLMSSTEKFKTPWREFFTSM. A helical transmembrane segment spans residues 316–336; that stretch reads PVYAIIVANFCRSWTFYLLLI. Over 337–354 the chain is Vesicular; sequence SQPAYFEEVFGFPISKVG. A helical transmembrane segment spans residues 355–375; that stretch reads ILSAVPHMVMTIIVPIGGQLA. At 376-391 the chain is on the cytoplasmic side; that stretch reads DFLRSRKILSTTTVRK. The chain crosses the membrane as a helical span at residues 392–412; sequence IMNCGGFGMEATLLLVVGFSH. The Vesicular portion of the chain corresponds to 413 to 414; it reads TR. Residues 415–435 traverse the membrane as a helical segment; sequence AVAISFLILAVGFSGFAISGF. Topologically, residues 436-448 are cytoplasmic; the sequence is NVNHLDIAPRYAS. A helical transmembrane segment spans residues 449–469; the sequence is ILMGISNGVGTLSGMVCPLIV. Topologically, residues 470-482 are vesicular; the sequence is GALTKHKTRLEWQ. The helical transmembrane segment at 483–503 threads the bilayer; sequence HVFVIASMVHYTGVIFYAIFA. Residues 504-587 are Cytoplasmic-facing; it reads SGEKQDWADP…NHYENGEYQT (84 aa). A compositionally biased stretch (acidic residues) spans 526–535; that stretch reads EDELADETEP. A disordered region spans residues 526–590; it reads EDELADETEP…ENGEYQTQYQ (65 aa). Over residues 536 to 557 the composition is skewed to polar residues; that stretch reads SSDSGLATRQKTYGTTDNSSGR.

The protein belongs to the major facilitator superfamily. Sodium/anion cotransporter family. VGLUT subfamily.

The protein resides in the cytoplasmic vesicle. It is found in the secretory vesicle. Its subcellular location is the synaptic vesicle membrane. The protein localises to the cell membrane. It localises to the synapse. The protein resides in the synaptosome. It carries out the reaction L-glutamate(out) = L-glutamate(in). The enzyme catalyses 3 Na(+)(out) + phosphate(out) = 3 Na(+)(in) + phosphate(in). The catalysed reaction is chloride(in) = chloride(out). The L-glutamate uniporter activity exhibits a biphasic dependence on chloride concentration. Chloride channel activity is allosterically activated by lumenal H(+) and Cl(-) leading to synaptic vesicles acidification. The glutamate transport activity is allosterically activated by lumenal H(+) and Cl(-), preventing non-vesicular L-glutamate release. Functionally, multifunctional transporter that transports L-glutamate as well as multiple ions such as chloride, sodium and phosphate. At the synaptic vesicle membrane, mainly functions as an uniporter that mediates the uptake of L-glutamate into synaptic vesicles at presynaptic nerve terminals of excitatory neural cells. The L-glutamate uniporter activity is electrogenic and is driven by the proton electrochemical gradient, mainly by the electrical gradient established by the vacuolar H(+)-ATPase across the synaptic vesicle membrane. In addition, functions as a chloride channel that allows a chloride permeation through the synaptic vesicle membrane that affects the proton electrochemical gradient and promotes synaptic vesicles acidification. At the plasma membrane, following exocytosis, functions as a symporter of Na(+) and phosphate from the extracellular space to the cytoplasm allowing synaptic phosphate homeostasis regulation. The symporter activity is electrogenic. Moreover, operates synergistically with SLC18A3/VACHT under a constant H(+) gradient, thereby allowing striatal vesicular acetylcholine uptake. The polypeptide is Vesicular glutamate transporter 3 (Danio rerio (Zebrafish)).